A 351-amino-acid polypeptide reads, in one-letter code: N(4)-bis(aminopropyl)spermidine synthase (351 aa).

The protein belongs to the branched-chain polyamine synthase family.

It is found in the cytoplasm. The enzyme catalyses 2 S-adenosyl 3-(methylsulfanyl)propylamine + spermidine = N(4)-bis(aminopropyl)spermidine + 2 S-methyl-5'-thioadenosine + 2 H(+). The protein operates within amine and polyamine biosynthesis. In terms of biological role, involved in the biosynthesis of branched-chain polyamines, which support the growth of thermophiles under high-temperature conditions. Catalyzes the sequential condensation of spermidine with the aminopropyl groups of decarboxylated S-adenosylmethionines to produce N(4)-bis(aminopropyl)spermidine via N(4)-aminopropylspermidine. Can also use spermine to produce N(4)-aminopropylspermine. This Thermococcus kodakarensis (strain ATCC BAA-918 / JCM 12380 / KOD1) (Pyrococcus kodakaraensis (strain KOD1)) protein is N(4)-bis(aminopropyl)spermidine synthase.